The chain runs to 736 residues: Melanotransferrin (736 aa).

Positions 1-19 (MRCRSAAMWIFLALRTALG) are cleaved as a signal peptide. Transferrin-like domains lie at 23–357 (VRWC…GLLC) and 366–706 (LRWC…GMQS). 2 cysteine pairs are disulfide-bonded: cysteine 26-cysteine 63 and cysteine 36-cysteine 54. Residues aspartate 78 and tyrosine 107 each contribute to the Fe(3+) site. N-linked (GlcNAc...) asparagine glycosylation is present at asparagine 118. 4 disulfides stabilise this stretch: cysteine 130–cysteine 216, cysteine 172–cysteine 189, cysteine 186–cysteine 199, and cysteine 257–cysteine 271. Threonine 132 is a binding site for hydrogencarbonate. The N-linked (GlcNAc...) asparagine glycan is linked to asparagine 135. The hydrogencarbonate site is built by arginine 136, valine 138, and glycine 139. Tyrosine 210 lines the Fe(3+) pocket. Residues histidine 279 and tyrosine 451 each contribute to the Fe(3+) site. An N-linked (GlcNAc...) asparagine glycan is attached at asparagine 515. Histidine 625 lines the Fe(3+) pocket. Glycine 711 carries the GPI-anchor amidated glycine lipid modification. A propeptide spans 712–736 (AAVGAPGASLLPLLPLAVGLLLSSL) (removed in mature form).

It belongs to the transferrin family.

It localises to the cell membrane. In terms of biological role, involved in iron cellular uptake. Seems to be internalized and then recycled back to the cell membrane. Binds a single atom of iron per subunit. Could also bind zinc. This is Melanotransferrin from Oryctolagus cuniculus (Rabbit).